The sequence spans 470 residues: MDASLITEIRKIVLQLSVSSNGSQSKEIEEIKKQVQVNVDDIRAANIKLDGLGRQIADISNSISTIESRLGEMDNRLVGISSQVTQLSNSVSQNTQSISSLGDRINAVEPRVDSLDTVTSNLTGRTSTLEADVGSLRTELAALTTRVTTEVTRLDGLINSGQNSIGELSTRLSNVETSMVTTAGRGLQKNGNTLNVIVGNGMWFNSSNQLQLDLSGQSKGVGFVGTGMVVKIDTNYFAYNSNGEITLVSQINELPSRVSTLESAKIDSVLPPLTVREASGVRTLSFGYDTSDFTIINSVLSLRSRLTLPTYRYPLELDTANNRVQVADRFGMRTGTWTGQLQYQHPQLSWRANVTLNLMKVDDWLVLSFSQMTTNSIMADGKFVINFVSGLSSGWQTGDTEPSSTIDPLSTTFAAVQFLNNGQRIDAFRIMGVSEWTDGELEIKNYGGTYTGHTQVYWAPWTIMYPCNVR.

The interval 1 to 324 (MDASLITEIR…LELDTANNRV (324 aa)) is tail. Asparagine 21 is a glycosylation site (N-linked (GlcNAc...) asparagine; by host). The stretch at 26-46 (KEIEEIKKQVQVNVDDIRAAN) forms a coiled coil. 3 N-linked (GlcNAc...) asparagine; by host glycosylation sites follow: asparagine 121, asparagine 205, and asparagine 353. A head region spans residues 325-470 (QVADRFGMRT…WTIMYPCNVR (146 aa)).

This sequence belongs to the orthoreovirus sigma-1 protein family. As to quaternary structure, homotrimer. Interacts (via the head region) with human F11R. Post-translationally, undergoes dramatic conformational rearrangements during viral disassembly in the endocytic pathway.

The protein resides in the virion. Its function is as follows. Fiber-like molecule that attaches the virion to the host cell membrane by binding to the primary receptor F11R/JAM-A and to sialic acid containing proteins (coreceptor). The interaction of sigma-1 with F11R is required for NF-kB activation and apoptosis. Binding to both sialic acid and F11R is required to induce maximal levels of apoptosis. This chain is Outer capsid protein sigma-1 (S1), found in Reovirus type 1 (strain Lang) (T1L).